Here is a 190-residue protein sequence, read N- to C-terminus: Class III hydrophobin F (190 aa).

The signal sequence occupies residues 1-18 (MRPITILCTLATLSTTLA). Cystine bridges form between Cys54/Cys115, Cys62/Cys109, Cys63/Cys97, and Cys116/Cys131.

It belongs to the fungal hydrophobin family. In terms of assembly, self-assembles to form functional amyloid fibrils called rodlets. Self-assembly into fibrillar rodlets occurs spontaneously at hydrophobic:hydrophilic interfaces and the rodlets further associate laterally to form amphipathic monolayers.

The protein resides in the secreted. The protein localises to the cell wall. In terms of biological role, aerial growth, conidiation, and dispersal of filamentous fungi in the environment rely upon a capability of their secreting small amphipathic proteins called hydrophobins (HPBs) with low sequence identity. Class I can self-assemble into an outermost layer of rodlet bundles on aerial cell surfaces, conferring cellular hydrophobicity that supports fungal growth, development and dispersal; whereas Class II form highly ordered films at water-air interfaces through intermolecular interactions but contribute nothing to the rodlet structure. RodF and rodG belong to Class III, which contains hydrophobins with intermediate (between classes I and II) or atypical characteristics. RodF, unlike rodA, is not required for rodlet formation. The sequence is that of Class III hydrophobin F from Aspergillus fumigatus (strain ATCC MYA-4609 / CBS 101355 / FGSC A1100 / Af293) (Neosartorya fumigata).